We begin with the raw amino-acid sequence, 195 residues long: uncharacterized protein (195 aa).

The signal sequence occupies residues 1 to 16; it reads MIRTIIVFMLLTISFG.

This is an uncharacterized protein from Acanthamoeba polyphaga mimivirus (APMV).